A 270-amino-acid polypeptide reads, in one-letter code: Orotidine 5'-phosphate decarboxylase (270 aa).

The Proton donor role is filled by K95.

This sequence belongs to the OMP decarboxylase family. Type 2 subfamily.

The catalysed reaction is orotidine 5'-phosphate + H(+) = UMP + CO2. It functions in the pathway pyrimidine metabolism; UMP biosynthesis via de novo pathway; UMP from orotate: step 2/2. The polypeptide is Orotidine 5'-phosphate decarboxylase (Dechloromonas aromatica (strain RCB)).